We begin with the raw amino-acid sequence, 734 residues long: Ribosomal RNA large subunit methyltransferase K/L (734 aa).

A THUMP domain is found at 49–167 (HAYRICMWSR…KTEHTYCLDL (119 aa)).

Belongs to the methyltransferase superfamily. RlmKL family.

Its subcellular location is the cytoplasm. It catalyses the reaction guanosine(2445) in 23S rRNA + S-adenosyl-L-methionine = N(2)-methylguanosine(2445) in 23S rRNA + S-adenosyl-L-homocysteine + H(+). It carries out the reaction guanosine(2069) in 23S rRNA + S-adenosyl-L-methionine = N(2)-methylguanosine(2069) in 23S rRNA + S-adenosyl-L-homocysteine + H(+). Specifically methylates the guanine in position 2445 (m2G2445) and the guanine in position 2069 (m7G2069) of 23S rRNA. This chain is Ribosomal RNA large subunit methyltransferase K/L, found in Acinetobacter baumannii (strain SDF).